Reading from the N-terminus, the 33-residue chain is Pardaxin P-4 (33 aa).

Belongs to the pardaxin family. In terms of assembly, monomer. In aqueous solution exists as a tetramer.

The protein localises to the secreted. It localises to the target cell membrane. Functionally, exhibits unusual shark repellent and surfactant properties. Forms voltage-dependent, ion-permeable channels in membranes. At high concentration causes cell membrane lysis. The chain is Pardaxin P-4 from Pardachirus marmoratus (Finless sole).